The primary structure comprises 218 residues: MKKRISTIANLVQSFNPKLVYDIGCDHSYLTSYLIKTNQNLTIVNSDISKNALLSNYQKFKNNNNIHFFVSDGFNNLPELNINPKIGVIAGLGGLKIINIISQKENFINRFVIQPQSNLIELRSFLSLNSWDIVNETLVQDREFIYPILVIEKLKKPFKLTKELVILGPKLINFKDKHCLMKHYQCLLRVYQPKQKPSLMDLKIIETLNKIITSYESS.

It belongs to the TrmK family.

The protein resides in the cytoplasm. The sequence is that of Putative tRNA methyltransferase MG248 from Mycoplasma genitalium (strain ATCC 33530 / DSM 19775 / NCTC 10195 / G37) (Mycoplasmoides genitalium).